We begin with the raw amino-acid sequence, 266 residues long: NADH dehydrogenase [ubiquinone] iron-sulfur protein 3, mitochondrial (266 aa).

A mitochondrion-targeting transit peptide spans 1–38 (MAAAVAAAARGCWQRLVGSAAPARVAGRPSVLLLPVRR).

The protein belongs to the complex I 30 kDa subunit family. As to quaternary structure, core subunit of respiratory chain NADH dehydrogenase (Complex I) which is composed of 45 different subunits. Interacts with NDUFAF3. Interacts with RAB5IF. Found in subcomplexes containing subunits NDUFS2, MT-ND1 and NDUFA13.

Its subcellular location is the mitochondrion inner membrane. The catalysed reaction is a ubiquinone + NADH + 5 H(+)(in) = a ubiquinol + NAD(+) + 4 H(+)(out). Functionally, core subunit of the mitochondrial membrane respiratory chain NADH dehydrogenase (Complex I) which catalyzes electron transfer from NADH through the respiratory chain, using ubiquinone as an electron acceptor. Essential for the catalytic activity and assembly of complex I. This is NADH dehydrogenase [ubiquinone] iron-sulfur protein 3, mitochondrial (NDUFS3) from Bos taurus (Bovine).